Reading from the N-terminus, the 333-residue chain is MNSSNLENFNYKSSIRDEVVPSRKRLTLPPWLEVAKPRLIPLLLATTLGGMALTEEWPLSSPKLICTLGGGALAAAAAGALNCLWEMELDKRMIRTSKRALPSGKLSSETVFLAAVSCTLAASMLLISGVNYLAAGLTLLGLCSYVILYTVILKPRTTKNIVFGGVAGAIPPLVGASAATGHVGLSGWWLFGLVMLWTPAHFWALAILLKDDYASVGIPMLPSVKGSLFTAKAISRYGLATVLMSIMGVFALPEGGLLYGIMLLPFNGRLLQLINKLKKSPDDLLRAKSLFRWSILYMFGICLLLLISRTQLSVEFEQQSMQIFFSIGSLLSN.

7 helical membrane-spanning segments follow: residues 64-84 (LICT…LNCL), 110-130 (TVFL…ISGV), 133-153 (LAAG…TVIL), 161-181 (IVFG…AATG), 189-209 (WLFG…AILL), 246-266 (IMGV…LLPF), and 287-307 (AKSL…LLLI).

The protein belongs to the UbiA prenyltransferase family. Protoheme IX farnesyltransferase subfamily.

It is found in the cell inner membrane. The enzyme catalyses heme b + (2E,6E)-farnesyl diphosphate + H2O = Fe(II)-heme o + diphosphate. It participates in porphyrin-containing compound metabolism; heme O biosynthesis; heme O from protoheme: step 1/1. Its function is as follows. Converts heme B (protoheme IX) to heme O by substitution of the vinyl group on carbon 2 of heme B porphyrin ring with a hydroxyethyl farnesyl side group. This Prochlorococcus marinus (strain MIT 9312) protein is Protoheme IX farnesyltransferase.